We begin with the raw amino-acid sequence, 97 residues long: Putative membrane protein insertion efficiency factor (97 aa).

Residues 72 to 97 form a disordered region; it reads VPGAEPDQEQHQCTPLCNHHSEDHSQ.

The protein belongs to the UPF0161 family.

Its subcellular location is the cell inner membrane. In terms of biological role, could be involved in insertion of integral membrane proteins into the membrane. The protein is Putative membrane protein insertion efficiency factor of Alcanivorax borkumensis (strain ATCC 700651 / DSM 11573 / NCIMB 13689 / SK2).